A 181-amino-acid polypeptide reads, in one-letter code: Large ribosomal subunit protein uL6 (181 aa).

This sequence belongs to the universal ribosomal protein uL6 family. As to quaternary structure, part of the 50S ribosomal subunit.

In terms of biological role, this protein binds to the 23S rRNA, and is important in its secondary structure. It is located near the subunit interface in the base of the L7/L12 stalk, and near the tRNA binding site of the peptidyltransferase center. This Ruthia magnifica subsp. Calyptogena magnifica protein is Large ribosomal subunit protein uL6.